A 156-amino-acid chain; its full sequence is D-aminoacyl-tRNA deacylase (156 aa).

Residues 142–143 (GP) carry the Gly-cisPro motif, important for rejection of L-amino acids motif.

Belongs to the DTD family. As to quaternary structure, homodimer.

Its subcellular location is the cytoplasm. The catalysed reaction is glycyl-tRNA(Ala) + H2O = tRNA(Ala) + glycine + H(+). It carries out the reaction a D-aminoacyl-tRNA + H2O = a tRNA + a D-alpha-amino acid + H(+). Functionally, an aminoacyl-tRNA editing enzyme that deacylates mischarged D-aminoacyl-tRNAs. Also deacylates mischarged glycyl-tRNA(Ala), protecting cells against glycine mischarging by AlaRS. Acts via tRNA-based rather than protein-based catalysis; rejects L-amino acids rather than detecting D-amino acids in the active site. By recycling D-aminoacyl-tRNA to D-amino acids and free tRNA molecules, this enzyme counteracts the toxicity associated with the formation of D-aminoacyl-tRNA entities in vivo and helps enforce protein L-homochirality. The chain is D-aminoacyl-tRNA deacylase from Cupriavidus metallidurans (strain ATCC 43123 / DSM 2839 / NBRC 102507 / CH34) (Ralstonia metallidurans).